The following is a 383-amino-acid chain: Putative F-box protein At4g09190 (383 aa).

The 52-residue stretch at 16-67 (RSQREHIPLDLIVEIVSSLPAKSIVRFRSVSKLWSSIITTPDFTSSVVTRSL) folds into the F-box domain.

The sequence is that of Putative F-box protein At4g09190 from Arabidopsis thaliana (Mouse-ear cress).